The sequence spans 233 residues: Orotidine 5'-phosphate decarboxylase (233 aa).

Substrate is bound by residues aspartate 11, lysine 33, aspartate 60–threonine 69, threonine 120, arginine 181, glutamine 190, glycine 210, and arginine 211. The Proton donor role is filled by lysine 62.

It belongs to the OMP decarboxylase family. Type 1 subfamily. Homodimer.

The enzyme catalyses orotidine 5'-phosphate + H(+) = UMP + CO2. It participates in pyrimidine metabolism; UMP biosynthesis via de novo pathway; UMP from orotate: step 2/2. Functionally, catalyzes the decarboxylation of orotidine 5'-monophosphate (OMP) to uridine 5'-monophosphate (UMP). This Vibrio campbellii (strain ATCC BAA-1116) protein is Orotidine 5'-phosphate decarboxylase.